Here is a 98-residue protein sequence, read N- to C-terminus: Capsid assembly scaffolding protein (98 aa).

The stretch at 40 to 62 (VSEYNDLTKSHEKLAAEKDDLIV) forms a coiled coil.

It belongs to the phi29likevirus scaffolding protein family. Homodimer. Interacts non-specifically with DNA; probably binds DNA in the early stages of DNA packaging.

Functionally, scaffolding protein involved in the icosahedric procapsid assembly. Coassembles with the capsid proteins to form the procapsid. The scaffolding protein is found within the capsid as a serie of concentric shells. During DNA packaging, the scaffolding protein molecules are released from the procapsid. This chain is Capsid assembly scaffolding protein (7), found in Bacillus subtilis (Bacteriophage phi-29).